A 218-amino-acid chain; its full sequence is MFALKSILVTSLITSTALAHFTLDYPQSRGFVDDTENQFCGGFNTVEARQPFPLGSGPVHIDSHHALATIVAFISTSSNPTSFDDFNTTSNGTAIPLASSIFQVPQGEKCFNIDLQSLNVGLTNGSEVTLQIQYDGGDGNLYQCSDLVLIEGYEVPSNETCTNDASKASNATSTSSGSATATSAAATSSSSGTSGAIKEVVGFGALSLALGIAGLIIL.

Residues M1–A19 form the signal peptide. Cu(2+) contacts are provided by H20 and H65. Residues N87, N91, and N124 are each glycosylated (N-linked (GlcNAc...) asparagine). D138 is a binding site for Cu(2+). N158 and N170 each carry an N-linked (GlcNAc...) asparagine glycan. Positions T160–S194 are disordered. Residues A165–S194 show a composition bias toward low complexity. The GPI-anchor amidated serine moiety is linked to residue S190. The propeptide at S191 to L218 is removed in mature form.

The protein belongs to the X325 family. Interacts with the CUF1-dependent copper transporter CTR1. Requires Cu(2+) as cofactor.

It localises to the cell membrane. Its function is as follows. Lytic polysaccharide monooxygenase-like protein that has diverged to biological functions other than polysaccharide degradation since it does not perform oxidative cleavage of polysaccharides. Cell surface-bound protein that functions in the copper-accumulation pathway shared by the CUF1-dependent copper transporter CTR1. Involved in maintaining cell wall integrity during copper deficiency. Binds Cu(2+) with an estimated 1:1 stoichiometry and might serve as an extracellular copper ligand. FRE4 and FRE7 metalloreductases probably function together with CTR1 and BIM1 to liberate the Cu(2+) bound to the BIM1 copper-binding site for subsequent import of Cu(+) into the cell by CTR1, via the reduction of BIM1-bound Cu(2+) to Cu(+) to reduce binding affinity for BIM1 but increase affinity for CTR1. Facilitates copper acquisition in the brain of mammalian hosts and acts as a copper-dependent virulence trait in fungal meningitis. While BIM1 plays a critical role in cryptococcal meningitis, at least in part through its role in copper acquisition, it could play additional roles during copper limitation or as a means to invade and colonize host tissues in the brain, by compromising host carbohydrate integrity via its lytic polysaccharide monooxygenase (LPMO) activity, which has still to be determined. This Cryptococcus neoformans var. grubii serotype A (strain H99 / ATCC 208821 / CBS 10515 / FGSC 9487) (Filobasidiella neoformans var. grubii) protein is Copper acquisition factor BIM1.